Consider the following 245-residue polypeptide: tRNA (guanine-N(7)-)-methyltransferase (245 aa).

Residues Glu71, Glu96, Asp123, and Asp146 each contribute to the S-adenosyl-L-methionine site. Residue Asp146 is part of the active site. Residue Lys150 coordinates substrate. The segment at 152 to 157 (KHNKRR) is interaction with RNA. Residues Asp182 and 224 to 227 (TKFE) contribute to the substrate site.

This sequence belongs to the class I-like SAM-binding methyltransferase superfamily. TrmB family.

The enzyme catalyses guanosine(46) in tRNA + S-adenosyl-L-methionine = N(7)-methylguanosine(46) in tRNA + S-adenosyl-L-homocysteine. The protein operates within tRNA modification; N(7)-methylguanine-tRNA biosynthesis. Functionally, catalyzes the formation of N(7)-methylguanine at position 46 (m7G46) in tRNA. This is tRNA (guanine-N(7)-)-methyltransferase from Albidiferax ferrireducens (strain ATCC BAA-621 / DSM 15236 / T118) (Rhodoferax ferrireducens).